The chain runs to 243 residues: DNA repair protein RecO (243 aa).

This sequence belongs to the RecO family.

In terms of biological role, involved in DNA repair and RecF pathway recombination. In Xylella fastidiosa (strain M23), this protein is DNA repair protein RecO.